The chain runs to 1120 residues: Prophage side tail fiber protein homolog StfR (1120 aa).

Disordered regions lie at residues 129–154 (KSAS…SARA), 221–442 (SAST…ATRA), and 960–1021 (SGRA…AGAH). 3 stretches are compositionally biased toward low complexity: residues 221–239 (SAST…ARDA), 248–395 (SSET…SASA), and 402–442 (RQAS…ATRA). Residues 985–1021 (DLGTKTTSSFDYGTKSTNNTGAHTHSVSGSTNSAGAH) show a composition bias toward polar residues.

It belongs to the tail fiber family.

The sequence is that of Prophage side tail fiber protein homolog StfR (stfR) from Escherichia coli (strain K12).